Here is a 288-residue protein sequence, read N- to C-terminus: Dysbindin protein homolog (288 aa).

Residues 147–239 adopt a coiled-coil conformation; sequence AQLQNSSQVL…QRERQAVFDD (93 aa).

Belongs to the dysbindin family. Component of the biogenesis of lysosome-related organelles complex-1 (BLOC-1) composed of Blos1, Blos2, Blos3, Blos4, Dysb, Muted, Pldn and Snapin. Interacts with Pldn and Snapin.

Component of the biogenesis of lysosome-related organelles complex-1 (BLOC-1) involved in pigment granule biogenesis and membrane trafficking in synapses. In response to high synaptic activity at neuromuscular junctions, stabilizes Pldn protein levels and, together with Pldn, plays a role in promoting efficient synaptic vesicle recycling and re-formation through early endosomes. This Drosophila melanogaster (Fruit fly) protein is Dysbindin protein homolog.